The primary structure comprises 224 residues: Transcriptional regulatory protein CiaR (224 aa).

The Response regulatory domain maps to 3–116; it reads KILLVEDDLG…ELKMRIQALL (114 aa). D51 is modified (4-aspartylphosphate). A DNA-binding region (ompR/PhoB-type) is located at residues 124 to 222; the sequence is ENTLTYGNIV…LRSVGYLLKD (99 aa).

Post-translationally, phosphorylated by CiaH.

It is found in the cytoplasm. In terms of biological role, member of the two-component regulatory system CiaH/CiaR. Involved in early steps of competence regulation and in penicillin susceptibility. The protein is Transcriptional regulatory protein CiaR (ciaR) of Streptococcus pneumoniae (strain ATCC BAA-255 / R6).